The primary structure comprises 309 residues: Taste receptor type 2 member 31 (309 aa).

The Extracellular portion of the chain corresponds to 1–2 (MI). A helical membrane pass occupies residues 3-23 (TFLPTIFSILVVVIFVIGNFG). Topologically, residues 24–55 (NGFIALVNSIEWVKRQKISFADQILTALAVSR) are cytoplasmic. A helical membrane pass occupies residues 56 to 76 (VGLLWALLLNWYSTVFNPAFY). At 77–100 (SVGVRTTVYDVWTVTGHFSNWLAT) the chain is on the extracellular side. Residues 101–121 (SLSIFYLLKIANFSNLIFLHL) traverse the membrane as a helical segment. Residues 122 to 126 (KRRVK) are Cytoplasmic-facing. The chain crosses the membrane as a helical span at residues 127-147 (SVILVMLLGPLLFLACQLFVI). The Extracellular segment spans residues 148 to 181 (NMKEILRTKEYEGNMTWKIKLRSAMYLSDATITT). Asn-161 is a glycosylation site (N-linked (GlcNAc...) asparagine). A helical membrane pass occupies residues 182 to 202 (LANLVPFTLTLLSFLLLICSL). At 203–229 (CKHLNKMQLHGKGSQDPSTKVHIKVLQ) the chain is on the cytoplasmic side. Residues 230-250 (TVISFLLLCAIYFLSIMISVW) traverse the membrane as a helical segment. Topologically, residues 251–259 (SFGSLENKP) are extracellular. The helical transmembrane segment at 260–280 (VFMFCKAIRFSYPSIHPFILI) threads the bilayer. Topologically, residues 281 to 309 (WGNKKLKQTFLSVLRQVRYWVKGEKPSSP) are cytoplasmic.

It belongs to the G-protein coupled receptor T2R family.

It localises to the membrane. Its function is as follows. Receptor that may play a role in the perception of bitterness and is gustducin-linked. May play a role in sensing the chemical composition of the gastrointestinal content. The activity of this receptor may stimulate alpha gustducin, mediate PLC-beta-2 activation and lead to the gating of TRPM5. This chain is Taste receptor type 2 member 31 (TAS2R31), found in Pongo pygmaeus (Bornean orangutan).